A 593-amino-acid chain; its full sequence is Protein GAMETE EXPRESSED 1 (593 aa).

An N-terminal signal peptide occupies residues 1–24 (MDRFSRKCLLFLLLIILLDSPLTC). The Extracellular portion of the chain corresponds to 25–427 (HSWGWFSSSS…LHNAMLLESR (403 aa)). 2 coiled-coil regions span residues 156-194 (CQQLQSNAFKNEIERLVNELKNTAQYTEDKLDILESKSD) and 350-387 (EALQESRNTLQRLKEFSQEQQEDLAKRQEKLQEVHDHL). Residues 428 to 448 (VIKAFVIYFLSIFVIYMFTST) traverse the membrane as a helical segment. The Cytoplasmic portion of the chain corresponds to 449 to 457 (KQTYIIRPR). The chain crosses the membrane as a helical span at residues 458 to 476 (LYIGLCVTLALEVASLRYV). Residues 477–485 (NDTERQAWM) lie on the Extracellular side of the membrane. The helical transmembrane segment at 486-506 (INLIRSLFALLASAQLLHAAL) threads the bilayer. Residues 507 to 593 (SYRDYEVLNH…TRRLYNFRPR (87 aa)) lie on the Cytoplasmic side of the membrane.

In terms of assembly, homodimer. As to expression, in tricellular pollen, expressed in mature sperm cells. Not expressed in bicellular or unicellular pollen. Detected in ovules, roots and guard cells. Expressed in the embryo sac before cellularization, in the egg cell after cellularization, in the zygote/embryo immediately after fertilization and in the pollen vegetative cell.

Its subcellular location is the cell membrane. Has a dual function during gametophyte development and early embryogenesis. Required for correct pollen maturation. The sequence is that of Protein GAMETE EXPRESSED 1 (GEX1) from Arabidopsis thaliana (Mouse-ear cress).